The primary structure comprises 839 residues: DNA-directed RNA polymerase YonO (839 aa).

Mg(2+)-binding residues include D535, D537, and D539.

It belongs to the YRH RNA polymerase family. It depends on a divalent metal cation as a cofactor.

The catalysed reaction is RNA(n) + a ribonucleoside 5'-triphosphate = RNA(n+1) + diphosphate. Its function is as follows. A single subunit DNA-dependent RNA polymerase (RNAP) that catalyzes the transcription of DNA into RNA using the four ribonucleoside triphosphates (rNTPs) as substrates. The enzyme is more highly processive than the multisubunit RNAP from E.coli but is considerably more error-prone. It has no detectable proof-reading function but can perform pyrophosphorolysis. Probably transcribes the late genes of the SPbeta phage starting from yonK. The protein is DNA-directed RNA polymerase YonO (yonO) of Bacillus pumilus (Bacillus mesentericus).